The chain runs to 155 residues: Small ribosomal subunit protein uS7 (155 aa).

This sequence belongs to the universal ribosomal protein uS7 family. In terms of assembly, part of the 30S ribosomal subunit. Contacts proteins S9 and S11.

Functionally, one of the primary rRNA binding proteins, it binds directly to 16S rRNA where it nucleates assembly of the head domain of the 30S subunit. Is located at the subunit interface close to the decoding center, probably blocks exit of the E-site tRNA. The chain is Small ribosomal subunit protein uS7 from Thermotoga petrophila (strain ATCC BAA-488 / DSM 13995 / JCM 10881 / RKU-1).